The following is a 178-amino-acid chain: uncharacterized protein (178 aa).

Disordered stretches follow at residues Asn89–Ile115 and Asp136–Ala178. The segment covering Ala98–Thr109 has biased composition (low complexity). Acidic residues predominate over residues Asp167–Ala178.

The protein localises to the cytoplasm. The protein resides in the nucleus. This is an uncharacterized protein from Schizosaccharomyces pombe (strain 972 / ATCC 24843) (Fission yeast).